A 248-amino-acid polypeptide reads, in one-letter code: tRNA pseudouridine synthase A (248 aa).

The active-site Nucleophile is aspartate 53. Tyrosine 111 is a binding site for substrate.

Belongs to the tRNA pseudouridine synthase TruA family. Homodimer.

It catalyses the reaction uridine(38/39/40) in tRNA = pseudouridine(38/39/40) in tRNA. Formation of pseudouridine at positions 38, 39 and 40 in the anticodon stem and loop of transfer RNAs. The chain is tRNA pseudouridine synthase A from Listeria monocytogenes serovar 1/2a (strain ATCC BAA-679 / EGD-e).